Here is a 261-residue protein sequence, read N- to C-terminus: Cytochrome c oxidase subunit 3 (261 aa).

Topologically, residues 1–15 (MTHQTHAYHMVNPSP) are mitochondrial matrix. Residues 16–34 (WPLTGALSALLMTSGLIMW) form a helical membrane-spanning segment. Residues 35 to 40 (FHYNSM) are Mitochondrial intermembrane-facing. The helical transmembrane segment at 41 to 66 (ALLTLGFTTNLLTMYQWWRDVIREGT) threads the bilayer. Topologically, residues 67-72 (FQGHHT) are mitochondrial matrix. Residues 73-105 (PIVQKGLRYGMVLFIVSEVFFFAGFFWAFYHSS) form a helical membrane-spanning segment. Over 106–128 (LAPTPELGGCWPPTGIIPLNPLE) the chain is Mitochondrial intermembrane. Residues 129–152 (VPLLNTSVLLASGVSITWAHHSLM) traverse the membrane as a helical segment. Over 153-155 (EGN) the chain is Mitochondrial matrix. A helical membrane pass occupies residues 156 to 183 (RKHMLQALFITISLGVYFTLLQASEYYE). Topologically, residues 184 to 190 (TSFTISD) are mitochondrial intermembrane. Residues 191 to 223 (GVYGSTFFMATGFHGLHVIIGSTFLIVCFLRQL) form a helical membrane-spanning segment. The Mitochondrial matrix portion of the chain corresponds to 224–232 (YYHFTSNHH). Residues 233-256 (FGFEAAAWYWHFVDVVWLFLYVSI) traverse the membrane as a helical segment. Over 257 to 261 (YWWGS) the chain is Mitochondrial intermembrane.

Belongs to the cytochrome c oxidase subunit 3 family. As to quaternary structure, component of the cytochrome c oxidase (complex IV, CIV), a multisubunit enzyme composed of 14 subunits. The complex is composed of a catalytic core of 3 subunits MT-CO1, MT-CO2 and MT-CO3, encoded in the mitochondrial DNA, and 11 supernumerary subunits COX4I, COX5A, COX5B, COX6A, COX6B, COX6C, COX7A, COX7B, COX7C, COX8 and NDUFA4, which are encoded in the nuclear genome. The complex exists as a monomer or a dimer and forms supercomplexes (SCs) in the inner mitochondrial membrane with NADH-ubiquinone oxidoreductase (complex I, CI) and ubiquinol-cytochrome c oxidoreductase (cytochrome b-c1 complex, complex III, CIII), resulting in different assemblies (supercomplex SCI(1)III(2)IV(1) and megacomplex MCI(2)III(2)IV(2)).

It is found in the mitochondrion inner membrane. The catalysed reaction is 4 Fe(II)-[cytochrome c] + O2 + 8 H(+)(in) = 4 Fe(III)-[cytochrome c] + 2 H2O + 4 H(+)(out). Functionally, component of the cytochrome c oxidase, the last enzyme in the mitochondrial electron transport chain which drives oxidative phosphorylation. The respiratory chain contains 3 multisubunit complexes succinate dehydrogenase (complex II, CII), ubiquinol-cytochrome c oxidoreductase (cytochrome b-c1 complex, complex III, CIII) and cytochrome c oxidase (complex IV, CIV), that cooperate to transfer electrons derived from NADH and succinate to molecular oxygen, creating an electrochemical gradient over the inner membrane that drives transmembrane transport and the ATP synthase. Cytochrome c oxidase is the component of the respiratory chain that catalyzes the reduction of oxygen to water. Electrons originating from reduced cytochrome c in the intermembrane space (IMS) are transferred via the dinuclear copper A center (CU(A)) of subunit 2 and heme A of subunit 1 to the active site in subunit 1, a binuclear center (BNC) formed by heme A3 and copper B (CU(B)). The BNC reduces molecular oxygen to 2 water molecules using 4 electrons from cytochrome c in the IMS and 4 protons from the mitochondrial matrix. The sequence is that of Cytochrome c oxidase subunit 3 (MT-CO3) from Canis lupus familiaris (Dog).